Reading from the N-terminus, the 279-residue chain is uncharacterized protein (279 aa).

2 disordered regions span residues Tyr50 to Asn109 and Ser249 to Leu279. The span at Asn68–Asn109 shows a compositional bias: low complexity.

This is an uncharacterized protein from Dictyostelium discoideum (Social amoeba).